A 228-amino-acid polypeptide reads, in one-letter code: Aldehyde dehydrogenase 9 (228 aa).

Residue 76–81 (GSTETA) coordinates NAD(+). Active-site residues include E99 and C132.

The protein belongs to the aldehyde dehydrogenase family.

The enzyme catalyses an aldehyde + NAD(+) + H2O = a carboxylate + NADH + 2 H(+). The protein operates within alcohol metabolism; ethanol degradation; acetate from ethanol: step 2/2. This Polyandrocarpa misakiensis (Tunicate) protein is Aldehyde dehydrogenase 9 (ALDH9).